The following is a 101-amino-acid chain: uncharacterized protein (101 aa).

Residues 39 to 74 are disordered; sequence CDERHGRPLPHSQESQHGSATSKKAVRGTADTAPLE. Residues 50–60 are compositionally biased toward polar residues; that stretch reads SQESQHGSATS.

This is an uncharacterized protein from Homo sapiens (Human).